Reading from the N-terminus, the 401-residue chain is All trans-polyprenyl-diphosphate synthase PDSS2 (401 aa).

This sequence belongs to the FPP/GGPP synthase family. In terms of assembly, heterotetramer composed of 2 PDSS1/DPS1 and 2 PDSS2/DLP1 subunits.

It is found in the mitochondrion. It carries out the reaction 7 isopentenyl diphosphate + (2E,6E)-farnesyl diphosphate = all-trans-decaprenyl diphosphate + 7 diphosphate. The catalysed reaction is 6 isopentenyl diphosphate + (2E,6E)-farnesyl diphosphate = all-trans-nonaprenyl diphosphate + 6 diphosphate. It participates in cofactor biosynthesis; ubiquinone biosynthesis. Its function is as follows. Heterotetrameric enzyme that catalyzes the condensation of farnesyl diphosphate (FPP), which acts as a primer, and isopentenyl diphosphate (IPP) to produce prenyl diphosphates of varying chain lengths and participates in the determination of the side chain of ubiquinone. Supplies nona and decaprenyl diphosphate, the precursors for the side chain of the isoprenoid quinones ubiquinone-9 (Q9) and ubiquinone-10 (Q10) respectively. The enzyme adds isopentenyl diphosphate molecules sequentially to farnesyl diphosphate with trans stereochemistry. May play a role during cerebellar development. May regulate mitochondrial respiratory chain function. The sequence is that of All trans-polyprenyl-diphosphate synthase PDSS2 from Mus musculus (Mouse).